An 819-amino-acid chain; its full sequence is NEDD4-binding protein 1 (819 aa).

Polar residues predominate over residues 1 to 13; sequence MASGSVQSSSGNG. The disordered stretch occupies residues 1–20; the sequence is MASGSVQSSSGNGRRQAAVV. Residues 80-164 enclose the KH-like domain; the sequence is KQAVRRAKEY…VQQFIALFKD (85 aa). The segment covering 226–241 has biased composition (basic and acidic residues); that stretch reads DDKAECKVNQKDEVSR. Disordered stretches follow at residues 226–247 and 666–736; these read DDKAECKVNQKDEVSRKGAGTP and KLDD…MAPR. An RNase NYN domain is found at 517 to 669; the sequence is LKHIIIDGSN…LGRYGPKLDD (153 aa). Polar residues predominate over residues 673-689; the sequence is KQPNNRTVHSSFPSSNE. Residues 772–819 form a coCUN region; sequence RSPSETMQLKEALLKIFPEADQRHKINEILTAHPFMRDLNALSAMVLD.

The protein belongs to the N4BP1 family.

The protein resides in the cytoplasm. It is found in the cytosol. The protein localises to the nucleus. Its subcellular location is the nucleolus. It localises to the PML body. Potent suppressor of cytokine production that acts as a regulator of innate immune signaling and inflammation. Acts as a key negative regulator of select cytokine and chemokine responses elicited by TRIF-independent Toll-like receptors (TLRs), thereby limiting inflammatory cytokine responses to minor insults. Has ribonuclease activity. The chain is NEDD4-binding protein 1 from Xenopus tropicalis (Western clawed frog).